Reading from the N-terminus, the 443-residue chain is Probable glycine dehydrogenase (decarboxylating) subunit 1 (443 aa).

The protein belongs to the GcvP family. N-terminal subunit subfamily. As to quaternary structure, the glycine cleavage system is composed of four proteins: P, T, L and H. In this organism, the P 'protein' is a heterodimer of two subunits.

The enzyme catalyses N(6)-[(R)-lipoyl]-L-lysyl-[glycine-cleavage complex H protein] + glycine + H(+) = N(6)-[(R)-S(8)-aminomethyldihydrolipoyl]-L-lysyl-[glycine-cleavage complex H protein] + CO2. In terms of biological role, the glycine cleavage system catalyzes the degradation of glycine. The P protein binds the alpha-amino group of glycine through its pyridoxal phosphate cofactor; CO(2) is released and the remaining methylamine moiety is then transferred to the lipoamide cofactor of the H protein. The sequence is that of Probable glycine dehydrogenase (decarboxylating) subunit 1 from Nitratidesulfovibrio vulgaris (strain DSM 19637 / Miyazaki F) (Desulfovibrio vulgaris).